We begin with the raw amino-acid sequence, 183 residues long: ATP-dependent protease subunit HslV (183 aa).

T12 is an active-site residue. Positions 166, 169, and 172 each coordinate Na(+).

It belongs to the peptidase T1B family. HslV subfamily. In terms of assembly, a double ring-shaped homohexamer of HslV is capped on each side by a ring-shaped HslU homohexamer. The assembly of the HslU/HslV complex is dependent on binding of ATP.

The protein resides in the cytoplasm. It carries out the reaction ATP-dependent cleavage of peptide bonds with broad specificity.. Its activity is regulated as follows. Allosterically activated by HslU binding. In terms of biological role, protease subunit of a proteasome-like degradation complex believed to be a general protein degrading machinery. This is ATP-dependent protease subunit HslV from Afipia carboxidovorans (strain ATCC 49405 / DSM 1227 / KCTC 32145 / OM5) (Oligotropha carboxidovorans).